The primary structure comprises 607 residues: Elongation factor 4 (607 aa).

Positions 11 to 193 (EKIRNFSIIA…QIVEKVPAPQ (183 aa)) constitute a tr-type G domain. GTP is bound by residues 23–28 (DHGKST) and 140–143 (NKID).

The protein belongs to the TRAFAC class translation factor GTPase superfamily. Classic translation factor GTPase family. LepA subfamily.

It localises to the cell membrane. The catalysed reaction is GTP + H2O = GDP + phosphate + H(+). Functionally, required for accurate and efficient protein synthesis under certain stress conditions. May act as a fidelity factor of the translation reaction, by catalyzing a one-codon backward translocation of tRNAs on improperly translocated ribosomes. Back-translocation proceeds from a post-translocation (POST) complex to a pre-translocation (PRE) complex, thus giving elongation factor G a second chance to translocate the tRNAs correctly. Binds to ribosomes in a GTP-dependent manner. The chain is Elongation factor 4 from Lactococcus lactis subsp. lactis (strain IL1403) (Streptococcus lactis).